The primary structure comprises 397 residues: Growth-regulating factor 1 (397 aa).

The QLQ domain occupies 18-53 (PFTASQWQELEHQALIYKYMASGTPIPSDLILPLRR). Short sequence motifs (bipartite nuclear localization signal) lie at residues 86–105 (RKAEDPEPGRCRRTDGKKWR) and 123–130 (RGKNRSRK). One can recognise a WRC domain in the interval 90 to 134 (DPEPGRCRRTDGKKWRCSKEAYPDSKYCEKHMHRGKNRSRKPVEM). The segment at 117–176 (CEKHMHRGKNRSRKPVEMSLATPPPPSSSATSAASNTSAGVAPTTTTTSSPAPSYSRPAP) is disordered. The segment covering 120–129 (HMHRGKNRSR) has biased composition (basic residues). The segment covering 144–174 (SSATSAASNTSAGVAPTTTTTSSPAPSYSRP) has biased composition (low complexity).

The protein belongs to the GRF family.

The protein resides in the nucleus. In terms of biological role, transcription activator that plays a regulatory role in gibberellin-induced stem elongation. This Oryza sativa subsp. japonica (Rice) protein is Growth-regulating factor 1 (GRF1).